Here is a 692-residue protein sequence, read N- to C-terminus: Glycogen phosphorylase (692 aa).

An N6-(pyridoxal phosphate)lysine modification is found at Lys586.

Belongs to the glycogen phosphorylase family. It depends on pyridoxal 5'-phosphate as a cofactor.

It carries out the reaction [(1-&gt;4)-alpha-D-glucosyl](n) + phosphate = [(1-&gt;4)-alpha-D-glucosyl](n-1) + alpha-D-glucose 1-phosphate. Phosphorylase is an important allosteric enzyme in carbohydrate metabolism. Enzymes from different sources differ in their regulatory mechanisms and in their natural substrates. However, all known phosphorylases share catalytic and structural properties. This is Glycogen phosphorylase (glgP) from Aquifex aeolicus (strain VF5).